A 155-amino-acid polypeptide reads, in one-letter code: Fibroblast growth factor 1 (155 aa).

Positions 1–15 (MAEGEITTFTALTER) are excised as a propeptide. A heparin-binding site is contributed by Asn33. The interval 127–143 (KKNGNSKLGPRTHYGQK) is heparin-binding.

It belongs to the heparin-binding growth factors family.

It is found in the secreted. Its subcellular location is the cytoplasm. The protein localises to the cell cortex. It localises to the cytosol. The protein resides in the nucleus. In terms of biological role, plays an important role in the regulation of cell survival, cell division, angiogenesis, cell differentiation and cell migration. Functions as a potent mitogen in vitro. Acts as a ligand for FGFR1 and integrins. Binds to FGFR1 in the presence of heparin leading to FGFR1 dimerization and activation via sequential autophosphorylation on tyrosine residues which act as docking sites for interacting proteins, leading to the activation of several signaling cascades. Binds to integrins. Its binding to integrins and subsequent ternary complex formation with integrins and FGFR1 are essential for FGF1 signaling. In Gallus gallus (Chicken), this protein is Fibroblast growth factor 1 (FGF1).